The chain runs to 117 residues: MIEYLAVLIYFLFSLALASLIIFLSFIFAPQKPDPEKISAYECGFDPFDDARGKFDIRFYLVAILFIIFDLEVTFLFPWAVTLGKIGFFGFWTMMAFLIILTIGFIYEWKKGALEWE.

Transmembrane regions (helical) follow at residues 8 to 28 (LIYF…SFIF), 61 to 81 (LVAI…PWAV), and 86 to 106 (IGFF…IGFI).

It belongs to the complex I subunit 3 family.

Its subcellular location is the mitochondrion membrane. The enzyme catalyses a ubiquinone + NADH + 5 H(+)(in) = a ubiquinol + NAD(+) + 4 H(+)(out). In terms of biological role, core subunit of the mitochondrial membrane respiratory chain NADH dehydrogenase (Complex I) that is believed to belong to the minimal assembly required for catalysis. Complex I functions in the transfer of electrons from NADH to the respiratory chain. The immediate electron acceptor for the enzyme is believed to be ubiquinone. In Tetraselmis subcordiformis (Marine green alga), this protein is NADH-ubiquinone oxidoreductase chain 3 (ND3).